The sequence spans 277 residues: Large ribosomal subunit protein uL2 (277 aa).

A disordered region spans residues 222 to 259 (GSVMNPNDHPHGGGEGKSPVGRPSPVTPWGKPALGYKT).

It belongs to the universal ribosomal protein uL2 family. Part of the 50S ribosomal subunit. Forms a bridge to the 30S subunit in the 70S ribosome.

Its function is as follows. One of the primary rRNA binding proteins. Required for association of the 30S and 50S subunits to form the 70S ribosome, for tRNA binding and peptide bond formation. It has been suggested to have peptidyltransferase activity; this is somewhat controversial. Makes several contacts with the 16S rRNA in the 70S ribosome. The sequence is that of Large ribosomal subunit protein uL2 from Clostridium beijerinckii (strain ATCC 51743 / NCIMB 8052) (Clostridium acetobutylicum).